A 290-amino-acid chain; its full sequence is 33 kDa chaperonin (290 aa).

2 disulfides stabilise this stretch: Cys235/Cys237 and Cys268/Cys271.

Belongs to the HSP33 family. Post-translationally, under oxidizing conditions two disulfide bonds are formed involving the reactive cysteines. Under reducing conditions zinc is bound to the reactive cysteines and the protein is inactive.

Its subcellular location is the cytoplasm. Its function is as follows. Redox regulated molecular chaperone. Protects both thermally unfolding and oxidatively damaged proteins from irreversible aggregation. Plays an important role in the bacterial defense system toward oxidative stress. This chain is 33 kDa chaperonin, found in Streptococcus pyogenes serotype M3 (strain ATCC BAA-595 / MGAS315).